The chain runs to 480 residues: Glutamate--tRNA ligase (480 aa).

A 'HIGH' region motif is present at residues Pro21–Gly31. Zn(2+)-binding residues include Cys110, Cys112, Cys137, and His139. The 'KMSKS' region signature appears at Lys248–Arg252. Lys251 contributes to the ATP binding site.

The protein belongs to the class-I aminoacyl-tRNA synthetase family. Glutamate--tRNA ligase type 1 subfamily. In terms of assembly, monomer. It depends on Zn(2+) as a cofactor.

The protein resides in the cytoplasm. The enzyme catalyses tRNA(Glu) + L-glutamate + ATP = L-glutamyl-tRNA(Glu) + AMP + diphosphate. Catalyzes the attachment of glutamate to tRNA(Glu) in a two-step reaction: glutamate is first activated by ATP to form Glu-AMP and then transferred to the acceptor end of tRNA(Glu). The chain is Glutamate--tRNA ligase from Mannheimia succiniciproducens (strain KCTC 0769BP / MBEL55E).